An 84-amino-acid polypeptide reads, in one-letter code: Toxin BmKaTx13 (84 aa).

An N-terminal signal peptide occupies residues 1 to 19 (MNYLVMISFALLLMKGVES). The LCN-type CS-alpha/beta domain occupies 21 to 83 (RDAYIAKPEN…VPIRVPGKCH (63 aa)). Disulfide bonds link Cys-31–Cys-82, Cys-35–Cys-55, Cys-41–Cys-65, and Cys-45–Cys-67. Residue Arg-84 is a propeptide, removed by a carboxypeptidase.

This sequence belongs to the long (4 C-C) scorpion toxin superfamily. Sodium channel inhibitor family. Alpha subfamily. Expressed by the venom gland.

It is found in the secreted. Its function is as follows. Alpha toxins bind voltage-independently at site-3 of sodium channels (Nav) and inhibit the inactivation of the activated channels, thereby blocking neuronal transmission. This toxin is active against mammals. The polypeptide is Toxin BmKaTx13 (Olivierus martensii (Manchurian scorpion)).